The chain runs to 243 residues: Probable transcriptional regulatory protein Patl_0550 (243 aa).

It belongs to the TACO1 family.

The protein localises to the cytoplasm. The chain is Probable transcriptional regulatory protein Patl_0550 from Pseudoalteromonas atlantica (strain T6c / ATCC BAA-1087).